The primary structure comprises 461 residues: Bifunctional protein GlmU (461 aa).

Residues 1–227 are pyrophosphorylase; it reads MEVIALILAA…PDEVLGVNDR (227 aa). Residues 8 to 11, lysine 22, glutamine 73, 78 to 79, 100 to 102, glycine 137, glutamate 152, asparagine 167, and asparagine 225 each bind UDP-N-acetyl-alpha-D-glucosamine; these read LAAG, GT, and YGD. Residue aspartate 102 coordinates Mg(2+). A Mg(2+)-binding site is contributed by asparagine 225. The segment at 228 to 248 is linker; sequence RQLAELERIYQVHQARALMER. Positions 249 to 461 are N-acetyltransferase; it reads GVTLRDPARF…EKARKESCAE (213 aa). UDP-N-acetyl-alpha-D-glucosamine-binding residues include arginine 332 and lysine 350. Residue histidine 362 is the Proton acceptor of the active site. Residues tyrosine 365 and asparagine 376 each contribute to the UDP-N-acetyl-alpha-D-glucosamine site. Acetyl-CoA-binding positions include alanine 379, 385–386, serine 404, alanine 422, and arginine 439; that span reads NY.

The protein in the N-terminal section; belongs to the N-acetylglucosamine-1-phosphate uridyltransferase family. In the C-terminal section; belongs to the transferase hexapeptide repeat family. As to quaternary structure, homotrimer. Mg(2+) serves as cofactor.

It localises to the cytoplasm. It catalyses the reaction alpha-D-glucosamine 1-phosphate + acetyl-CoA = N-acetyl-alpha-D-glucosamine 1-phosphate + CoA + H(+). It carries out the reaction N-acetyl-alpha-D-glucosamine 1-phosphate + UTP + H(+) = UDP-N-acetyl-alpha-D-glucosamine + diphosphate. The protein operates within nucleotide-sugar biosynthesis; UDP-N-acetyl-alpha-D-glucosamine biosynthesis; N-acetyl-alpha-D-glucosamine 1-phosphate from alpha-D-glucosamine 6-phosphate (route II): step 2/2. Its pathway is nucleotide-sugar biosynthesis; UDP-N-acetyl-alpha-D-glucosamine biosynthesis; UDP-N-acetyl-alpha-D-glucosamine from N-acetyl-alpha-D-glucosamine 1-phosphate: step 1/1. It participates in bacterial outer membrane biogenesis; LPS lipid A biosynthesis. Functionally, catalyzes the last two sequential reactions in the de novo biosynthetic pathway for UDP-N-acetylglucosamine (UDP-GlcNAc). The C-terminal domain catalyzes the transfer of acetyl group from acetyl coenzyme A to glucosamine-1-phosphate (GlcN-1-P) to produce N-acetylglucosamine-1-phosphate (GlcNAc-1-P), which is converted into UDP-GlcNAc by the transfer of uridine 5-monophosphate (from uridine 5-triphosphate), a reaction catalyzed by the N-terminal domain. The polypeptide is Bifunctional protein GlmU (Methylococcus capsulatus (strain ATCC 33009 / NCIMB 11132 / Bath)).